The primary structure comprises 413 residues: MYSNNQRSRIGSHTWKIAFLFAFLALLVDGADLMLLSYSLNSIKAEFNLSTVEAGMLGSFTLAGMAIGGIFGGWACDRFGRVRIVVISILTFSILTCGLGLTQSFIQFGVLRFFASLGLGSLYIACNTLMAEYVPTKYRTTVLGTLQAGWTVGYIVATLLAGWLIPDHGWRVLFYVAIIPVLMAVLMHFFVPEPAAWQQSRLAPSKQTETVKTSAFKLIFQDKRNRNMFILWALTAGFLQFGYYGVNNWMPSYLESELGMKFKEMTAYMVGTYTAMILGKILAGFMADKLGRRFTYAFGAIGTAIFLPLIVFYNSPDNILYLLVIFGFLYGIPYGVNATYMTESFPTAIRGTAIGGAYNVGRLGAAIAPATIGFLASGGSIGLGFVVMGAAYFICGVIPALFIKEKQYDPQQS.

The Cytoplasmic portion of the chain corresponds to 1 to 16 (MYSNNQRSRIGSHTWK). Residues 17–37 (IAFLFAFLALLVDGADLMLLS) traverse the membrane as a helical segment. At 38 to 53 (YSLNSIKAEFNLSTVE) the chain is on the periplasmic side. The chain crosses the membrane as a helical span at residues 54 to 74 (AGMLGSFTLAGMAIGGIFGGW). Residues 75-85 (ACDRFGRVRIV) lie on the Cytoplasmic side of the membrane. The chain crosses the membrane as a helical span at residues 86 to 106 (VISILTFSILTCGLGLTQSFI). Residues 107 to 112 (QFGVLR) lie on the Periplasmic side of the membrane. A helical transmembrane segment spans residues 113–133 (FFASLGLGSLYIACNTLMAEY). Topologically, residues 134-145 (VPTKYRTTVLGT) are cytoplasmic. The helical transmembrane segment at 146–166 (LQAGWTVGYIVATLLAGWLIP) threads the bilayer. The Periplasmic segment spans residues 167 to 171 (DHGWR). A helical transmembrane segment spans residues 172–192 (VLFYVAIIPVLMAVLMHFFVP). Over 193–228 (EPAAWQQSRLAPSKQTETVKTSAFKLIFQDKRNRNM) the chain is Cytoplasmic. The chain crosses the membrane as a helical span at residues 229–249 (FILWALTAGFLQFGYYGVNNW). Residues 250 to 266 (MPSYLESELGMKFKEMT) lie on the Periplasmic side of the membrane. Residues 267 to 287 (AYMVGTYTAMILGKILAGFMA) form a helical membrane-spanning segment. At 288-293 (DKLGRR) the chain is on the cytoplasmic side. The helical transmembrane segment at 294–314 (FTYAFGAIGTAIFLPLIVFYN) threads the bilayer. The Periplasmic portion of the chain corresponds to 315-318 (SPDN). The chain crosses the membrane as a helical span at residues 319 to 339 (ILYLLVIFGFLYGIPYGVNAT). The Cytoplasmic segment spans residues 340–352 (YMTESFPTAIRGT). Residues 353–376 (AIGGAYNVGRLGAAIAPATIGFLA) form a helical membrane-spanning segment. The Periplasmic portion of the chain corresponds to 377–382 (SGGSIG). A helical membrane pass occupies residues 383 to 403 (LGFVVMGAAYFICGVIPALFI). Topologically, residues 404–413 (KEKQYDPQQS) are cytoplasmic.

This sequence belongs to the major facilitator superfamily. Aromatic acid:H(+) symporter (AAHS) (TC 2.A.1.15) family.

Its subcellular location is the cell inner membrane. Its function is as follows. Probable uptake of muconate. The sequence is that of Cis,cis-muconate transport protein (mucK) from Acinetobacter baylyi (strain ATCC 33305 / BD413 / ADP1).